The following is a 318-amino-acid chain: Transaldolase (318 aa).

The active-site Schiff-base intermediate with substrate is the Lys126.

This sequence belongs to the transaldolase family. Type 1 subfamily. As to quaternary structure, homodimer.

It is found in the cytoplasm. It catalyses the reaction D-sedoheptulose 7-phosphate + D-glyceraldehyde 3-phosphate = D-erythrose 4-phosphate + beta-D-fructose 6-phosphate. Its pathway is carbohydrate degradation; pentose phosphate pathway; D-glyceraldehyde 3-phosphate and beta-D-fructose 6-phosphate from D-ribose 5-phosphate and D-xylulose 5-phosphate (non-oxidative stage): step 2/3. In terms of biological role, transaldolase is important for the balance of metabolites in the pentose-phosphate pathway. The polypeptide is Transaldolase (Cupriavidus necator (strain ATCC 17699 / DSM 428 / KCTC 22496 / NCIMB 10442 / H16 / Stanier 337) (Ralstonia eutropha)).